The sequence spans 590 residues: G protein-coupled receptor kinase 5 (590 aa).

The tract at residues 1–185 (MELENIVANT…LERQPVTKNT (185 aa)) is N-terminal. Residues 20–39 (GGKRKGKSKKWKEILKFPHI) are interaction with calmodulin. In terms of domain architecture, RGS spans 53–171 (YYSLCDKQPI…LDSMYFDRFL (119 aa)). The residue at position 136 (S136) is a Phosphoserine. Positions 186-448 (FRQYRVLGKG…AAEVKRHPFF (263 aa)) constitute a Protein kinase domain. Residues 192–200 (LGKGGFGEV) and K215 each bind ATP. D311 serves as the catalytic Proton acceptor. A Nuclear localization signal motif is present at residues 388–395 (RKEKVKRE). The AGC-kinase C-terminal domain occupies 449–514 (RNMNFKRLEA…GSVPIPWQNE (66 aa)). S484 is modified (phosphoserine; by autocatalysis). The residue at position 485 (T485) is a Phosphothreonine; by autocatalysis. A sufficient for membrane localization region spans residues 546-565 (PKKGLFHRLFRRQHQSNSKS). Residues 557-590 (RQHQSNSKSSPTPKTSCNHRINSNHINSNSTGSS) form a disordered region. A compositionally biased stretch (low complexity) spans 561–590 (SNSKSSPTPKTSCNHRINSNHINSNSTGSS). Phosphoserine is present on S579.

It belongs to the protein kinase superfamily. AGC Ser/Thr protein kinase family. GPRK subfamily. In terms of assembly, interacts with ST13 (via the C-terminus 303-319 AA). Interacts with TP53/p53. Interacts with HTR4 (via C-terminus 330-346 AA); this interaction is promoted by 5-HT (serotonin). Interacts with HDAC5. Interacts with GIT1. Autophosphorylated. Autophosphorylation may play a critical role in the regulation of GRK5 kinase activity.

It localises to the cytoplasm. The protein localises to the nucleus. It is found in the cell membrane. It carries out the reaction [G-protein-coupled receptor] + ATP = [G-protein-coupled receptor]-phosphate + ADP + H(+). Its activity is regulated as follows. Inhibited by calmodulin with an IC(50) of 50 nM. Calmodulin inhibits GRK5 association with receptor and phospholipid. Serine/threonine kinase that phosphorylates preferentially the activated forms of a variety of G-protein-coupled receptors (GPCRs). Such receptor phosphorylation initiates beta-arrestin-mediated receptor desensitization, internalization, and signaling events leading to their down-regulation. Phosphorylates a variety of GPCRs, including adrenergic receptors, muscarinic acetylcholine receptors (more specifically Gi-coupled M2/M4 subtypes), dopamine receptors and opioid receptors. In addition to GPCRs, also phosphorylates various substrates: Hsc70-interacting protein/ST13, TP53/p53, HDAC5, and arrestin-1/ARRB1. Phosphorylation of ARRB1 by GRK5 inhibits G-protein independent MAPK1/MAPK3 signaling downstream of 5HT4-receptors. Phosphorylation of HDAC5, a repressor of myocyte enhancer factor 2 (MEF2) leading to nuclear export of HDAC5 and allowing MEF2-mediated transcription. Phosphorylation of TP53/p53, a crucial tumor suppressor, inhibits TP53/p53-mediated apoptosis. Phosphorylation of ST13 regulates internalization of the chemokine receptor. Phosphorylates rhodopsin (RHO) (in vitro) and a non G-protein-coupled receptor, LRP6 during Wnt signaling (in vitro). The sequence is that of G protein-coupled receptor kinase 5 (Grk5) from Mus musculus (Mouse).